Consider the following 653-residue polypeptide: Calpain-10 (653 aa).

The Calpain catalytic domain maps to 13 to 321; sequence LFRDAAFPAA…FDEITIGYPI (309 aa). Catalysis depends on residues Cys73, His238, and Asn263. Domain III stretches follow at residues 322–494 and 513–653; these read TEAG…VSLS and EWGT…PSWQ.

The protein belongs to the peptidase C2 family.

In terms of biological role, calcium-regulated non-lysosomal thiol-protease which catalyzes limited proteolysis of substrates involved in cytoskeletal remodeling and signal transduction. May play a role in insulin-stimulated glucose uptake. In Macaca fascicularis (Crab-eating macaque), this protein is Calpain-10 (CAPN10).